The chain runs to 319 residues: MSVDLSAQQVTRMKKLQKKIRSEVGKAISDYNMVEEGDRIMCCLSGGKDSYAMLDILLDLQQRAPIKFEIVAVNLDQKQPGFPEHVLPAYLDSLGVAYHILEKDTYSIVRDKIPEGQKTCSLCSRLRRGTLYGFAQKIGATKIALGHHRDDIIETLFLNMFFAGKQKAMPPKLLSDDGANMVIRPLAYAREKDIAEYAELKGFPIIPCNLCGSQENLKRASVKEMLNQWDVEHPGRIESIFTAMQNTSPSQGVDREQFDFISLTRDANAPLKGEVAESDLPAFDFVDVSNNGHIDLDAASKAKRVNPEHKINIVSTYTP.

The short motif at 45–50 is the PP-loop motif element; it reads SGGKDS. Residues Cys120, Cys123, and Cys211 each coordinate [4Fe-4S] cluster.

The protein belongs to the TtcA family. In terms of assembly, homodimer. Mg(2+) is required as a cofactor. [4Fe-4S] cluster serves as cofactor.

Its subcellular location is the cytoplasm. It catalyses the reaction cytidine(32) in tRNA + S-sulfanyl-L-cysteinyl-[cysteine desulfurase] + AH2 + ATP = 2-thiocytidine(32) in tRNA + L-cysteinyl-[cysteine desulfurase] + A + AMP + diphosphate + H(+). It participates in tRNA modification. In terms of biological role, catalyzes the ATP-dependent 2-thiolation of cytidine in position 32 of tRNA, to form 2-thiocytidine (s(2)C32). The sulfur atoms are provided by the cysteine/cysteine desulfurase (IscS) system. This Shewanella woodyi (strain ATCC 51908 / MS32) protein is tRNA-cytidine(32) 2-sulfurtransferase.